A 313-amino-acid chain; its full sequence is Iron-sulfur protein required for NADH dehydrogenase, mitochondrial (313 aa).

The transit peptide at 1 to 22 (MATVALLRSLRRRELHAAHISA) directs the protein to the mitochondrion. 51–58 (GKGGVGKS) is an ATP binding site.

It belongs to the Mrp/NBP35 ATP-binding proteins family. It depends on [4Fe-4S] cluster as a cofactor.

The protein resides in the mitochondrion matrix. Essential during early vegetative growth. Required for the assembly of the mitochondrial membrane respiratory chain NADH dehydrogenase (Complex I). Involved in mitochondrial translation activity. May deliver of one or more Fe-S clusters to complex I subunits. The polypeptide is Iron-sulfur protein required for NADH dehydrogenase, mitochondrial (Arabidopsis thaliana (Mouse-ear cress)).